Consider the following 477-residue polypeptide: Sucrose-6-phosphate hydrolase (477 aa).

Residues 36–39, Q55, W63, 98–99, 160–161, E215, and W298 each bind substrate; these read WMND, FS, and RD. D39 is an active-site residue.

The protein belongs to the glycosyl hydrolase 32 family.

The protein resides in the cytoplasm. It catalyses the reaction Hydrolysis of terminal non-reducing beta-D-fructofuranoside residues in beta-D-fructofuranosides.. Its pathway is glycan biosynthesis; sucrose metabolism. Its function is as follows. Enables the bacterium to metabolize sucrose as a sole carbon source. This is Sucrose-6-phosphate hydrolase (cscA) from Escherichia coli.